The chain runs to 170 residues: Fimbrial protein (170 aa).

A propeptide spanning residues 1 to 7 is cleaved from the precursor; it reads MNTLQKG. The residue at position 8 (Phe-8) is an N-methylphenylalanine. The helical transmembrane segment at 8–28 threads the bilayer; sequence FTLIELMIVIAIVGILAAVAL. Ser-70 carries an O-linked (Gal...) serine glycan. At Ser-100 the chain carries O-(sn-1-glycerophosphoryl)serine. Cys-127 and Cys-163 are joined by a disulfide.

Belongs to the N-Me-Phe pilin family. In terms of assembly, the pili are polar flexible filaments of about 5.4 nanometers diameter and 2.5 micrometers average length; they consist of only a single polypeptide chain arranged in a helical configuration of five subunits per turn in the assembled pilus. Post-translationally, O-linked glycan consists of GlcNAc-Gal disaccharide.

It is found in the fimbrium. It localises to the membrane. Major component of the type IV pilus (T4P) that plays a role in cellular adherence, microcolony formation as well as twitching motility. The protein is Fimbrial protein (pilE) of Neisseria meningitidis serogroup A / serotype 4A (strain DSM 15465 / Z2491).